The sequence spans 150 residues: SsrA-binding protein (150 aa).

This sequence belongs to the SmpB family.

The protein localises to the cytoplasm. Its function is as follows. Required for rescue of stalled ribosomes mediated by trans-translation. Binds to transfer-messenger RNA (tmRNA), required for stable association of tmRNA with ribosomes. tmRNA and SmpB together mimic tRNA shape, replacing the anticodon stem-loop with SmpB. tmRNA is encoded by the ssrA gene; the 2 termini fold to resemble tRNA(Ala) and it encodes a 'tag peptide', a short internal open reading frame. During trans-translation Ala-aminoacylated tmRNA acts like a tRNA, entering the A-site of stalled ribosomes, displacing the stalled mRNA. The ribosome then switches to translate the ORF on the tmRNA; the nascent peptide is terminated with the 'tag peptide' encoded by the tmRNA and targeted for degradation. The ribosome is freed to recommence translation, which seems to be the essential function of trans-translation. This is SsrA-binding protein from Coprothermobacter proteolyticus (strain ATCC 35245 / DSM 5265 / OCM 4 / BT).